Consider the following 261-residue polypeptide: MRIALGIEYFGADYYGWQRQREVNSVQQELETALSRVANHPVEIQCAGRTDAGVNATGQVIHFDTTANRQMSAWTLGINAQLPDDIAVRWAHVVDDNFHARFSATARRYRYIIYNEPLRPGILAKGVSHYYHPLNADQMNEAGQLLLGERDFTSFRAAQCQSNTPFRNIMSLSVHRAGSYVILDIQANAFLHHMVRNIMGSLLLVGTGEKPKEWIGEILDAKDRTVSGATAKAEGLYLVDVTYPLHYGLPKPPLGPLWFNA.

Catalysis depends on Asp51, which acts as the Nucleophile. Tyr109 is a substrate binding site.

It belongs to the tRNA pseudouridine synthase TruA family. In terms of assembly, homodimer.

The catalysed reaction is uridine(38/39/40) in tRNA = pseudouridine(38/39/40) in tRNA. Formation of pseudouridine at positions 38, 39 and 40 in the anticodon stem and loop of transfer RNAs. The sequence is that of tRNA pseudouridine synthase A from Tolumonas auensis (strain DSM 9187 / NBRC 110442 / TA 4).